A 532-amino-acid polypeptide reads, in one-letter code: CTP synthase (532 aa).

An amidoligase domain region spans residues 1–265 (MKYIVVTGGV…DEYLMRKLNL (265 aa)). Residue Ser12 coordinates CTP. Position 12 (Ser12) interacts with UTP. ATP is bound by residues 13 to 18 (GLGKGI) and Asp70. Mg(2+) is bound by residues Asp70 and Glu140. CTP contacts are provided by residues 147 to 149 (DIE), 186 to 191 (KTKPTQ), and Lys222. Residues 186-191 (KTKPTQ) and Lys222 each bind UTP. The Glutamine amidotransferase type-1 domain occupies 289–529 (SIAIVGKYVD…VRAALKYRRE (241 aa)). An L-glutamine-binding site is contributed by Gly349. The active-site Nucleophile; for glutamine hydrolysis is the Cys376. L-glutamine is bound by residues 377–380 (FGFQ), Glu400, and Arg457. Residues His502 and Glu504 contribute to the active site.

Belongs to the CTP synthase family. Homotetramer.

The enzyme catalyses UTP + L-glutamine + ATP + H2O = CTP + L-glutamate + ADP + phosphate + 2 H(+). It catalyses the reaction L-glutamine + H2O = L-glutamate + NH4(+). It carries out the reaction UTP + NH4(+) + ATP = CTP + ADP + phosphate + 2 H(+). Its pathway is pyrimidine metabolism; CTP biosynthesis via de novo pathway; CTP from UDP: step 2/2. Allosterically activated by GTP, when glutamine is the substrate; GTP has no effect on the reaction when ammonia is the substrate. The allosteric effector GTP functions by stabilizing the protein conformation that binds the tetrahedral intermediate(s) formed during glutamine hydrolysis. Inhibited by the product CTP, via allosteric rather than competitive inhibition. Its function is as follows. Catalyzes the ATP-dependent amination of UTP to CTP with either L-glutamine or ammonia as the source of nitrogen. Regulates intracellular CTP levels through interactions with the four ribonucleotide triphosphates. This chain is CTP synthase, found in Archaeoglobus fulgidus (strain ATCC 49558 / DSM 4304 / JCM 9628 / NBRC 100126 / VC-16).